Reading from the N-terminus, the 232-residue chain is Orotidine 5'-phosphate decarboxylase (232 aa).

Substrate-binding positions include Asp13, Lys35, 62 to 71, Thr122, Arg182, Gln191, Gly211, and Arg212; that span reads DLKFHDIPNT. Lys64 (proton donor) is an active-site residue.

Belongs to the OMP decarboxylase family. Type 1 subfamily. Homodimer.

The enzyme catalyses orotidine 5'-phosphate + H(+) = UMP + CO2. It participates in pyrimidine metabolism; UMP biosynthesis via de novo pathway; UMP from orotate: step 2/2. In terms of biological role, catalyzes the decarboxylation of orotidine 5'-monophosphate (OMP) to uridine 5'-monophosphate (UMP). The sequence is that of Orotidine 5'-phosphate decarboxylase from Pseudomonas aeruginosa (strain LESB58).